Here is a 293-residue protein sequence, read N- to C-terminus: MGPPSACPHRECIPWQGLLLTASLLTFWNAPTTAWLFIASAPFEVAEGENVHLSVVYLPENLYSYGWYKGKTVEPNQLIAAYVIDTHVRTPGPAYSGRETISPSGDLHFQNVTLEDTGYYNLQVTYRNSQIEQASHHLRVYESVAQPSIQASSTTVTEKGSVVLTCHTNNTGTSFQWIFNNQRLQVTKRMKLSWFNHVLTIDPIRQEDAGEYQCEVSNPVSSNRSDPLKLTVKSDDNTLGILIGVLVGSLLVAALVCFLLLRKTGRASDQSDFREQQPPASTPGHGPSDSSIS.

Positions 1-34 (MGPPSACPHRECIPWQGLLLTASLLTFWNAPTTA) are cleaved as a signal peptide. At 35-240 (WLFIASAPFE…TVKSDDNTLG (206 aa)) the chain is on the extracellular side. Asn-111 is a glycosylation site (N-linked (GlcNAc...) asparagine). The Ig-like C2-type domain occupies 147–231 (PSIQASSTTV…SNRSDPLKLT (85 aa)). A disulfide bond links Cys-166 and Cys-214. Residues 241–261 (ILIGVLVGSLLVAALVCFLLL) form a helical membrane-spanning segment. The Cytoplasmic segment spans residues 262–293 (RKTGRASDQSDFREQQPPASTPGHGPSDSSIS). The disordered stretch occupies residues 267-293 (ASDQSDFREQQPPASTPGHGPSDSSIS).

Belongs to the immunoglobulin superfamily. CEA family.

The protein resides in the membrane. The sequence is that of Cell adhesion molecule CEACAM21 from Homo sapiens (Human).